The chain runs to 592 residues: Craniofacial development protein 2 (592 aa).

Residues 1 to 16 are compositionally biased toward basic and acidic residues; the sequence is MEEFDSKDISTSKDED. Disordered regions lie at residues 1 to 225 and 499 to 592; these read MEEF…KGQS and VTNE…DCNN. Positions 25–42 are enriched in acidic residues; it reads HEDDINELVKEDEVDGEE. 2 stretches are compositionally biased toward basic and acidic residues: residues 78 to 108 and 147 to 162; these read SRES…RQEE and KVEE…EVKL. A compositionally biased stretch (polar residues) spans 175 to 184; that stretch reads LTQQGRLSGR. Basic and acidic residues-rich tracts occupy residues 185–207, 508–523, 552–562, and 580–592; these read TSED…RRAD, EEAK…EKPE, SVFKQDEKDKP, and EKCD…DCNN. Residues 499-578 are hydrophilic; that stretch reads VTNEEDATNE…SVPSLPAGSG (80 aa).

Post-translationally, phosphorylated by CK2 (casein kinase II) in vitro. As to expression, expressed in liver and lung with higher expression in brain.

The protein resides in the cytoplasm. The protein localises to the nucleus. This chain is Craniofacial development protein 2 (CFDP2), found in Bos taurus (Bovine).